Reading from the N-terminus, the 430-residue chain is Tol-Pal system protein TolB (430 aa).

Residues 1–21 form the signal peptide; the sequence is MKQALRVAFGFLILWASVLHA.

Belongs to the TolB family. The Tol-Pal system is composed of five core proteins: the inner membrane proteins TolA, TolQ and TolR, the periplasmic protein TolB and the outer membrane protein Pal. They form a network linking the inner and outer membranes and the peptidoglycan layer.

It is found in the periplasm. Its function is as follows. Part of the Tol-Pal system, which plays a role in outer membrane invagination during cell division and is important for maintaining outer membrane integrity. TolB occupies a key intermediary position in the Tol-Pal system because it communicates directly with both membrane-embedded components, Pal in the outer membrane and TolA in the inner membrane. This Escherichia coli O139:H28 (strain E24377A / ETEC) protein is Tol-Pal system protein TolB.